A 342-amino-acid polypeptide reads, in one-letter code: Ribosomal RNA small subunit methyltransferase C (342 aa).

This sequence belongs to the methyltransferase superfamily. RsmC family. Monomer.

It localises to the cytoplasm. The catalysed reaction is guanosine(1207) in 16S rRNA + S-adenosyl-L-methionine = N(2)-methylguanosine(1207) in 16S rRNA + S-adenosyl-L-homocysteine + H(+). In terms of biological role, specifically methylates the guanine in position 1207 of 16S rRNA in the 30S particle. This Hahella chejuensis (strain KCTC 2396) protein is Ribosomal RNA small subunit methyltransferase C.